Here is a 253-residue protein sequence, read N- to C-terminus: Protein C1orf43 homolog (253 aa).

A helical membrane pass occupies residues 11–31 (VNVVLVMAYGSLVFVLLFIFV).

The protein localises to the membrane. It localises to the golgi apparatus. It is found in the mitochondrion. Its function is as follows. General regulator of phagocytosis. Required to uptake Gram negative bacterium by macrophages. In Mus musculus (Mouse), this protein is Protein C1orf43 homolog.